We begin with the raw amino-acid sequence, 44 residues long: Protein PsbN (44 aa).

A helical transmembrane segment spans residues 6-26 (FFFTFFLWFLLLSATGYSIYV).

It belongs to the PsbN family.

It is found in the plastid. The protein localises to the chloroplast thylakoid membrane. Functionally, may play a role in photosystem I and II biogenesis. The chain is Protein PsbN from Tetradesmus obliquus (Green alga).